Reading from the N-terminus, the 369-residue chain is 2-aminoethylphosphonate--pyruvate transaminase (369 aa).

N6-(pyridoxal phosphate)lysine is present on Lys-193.

This sequence belongs to the class-V pyridoxal-phosphate-dependent aminotransferase family. PhnW subfamily. Homodimer. The cofactor is pyridoxal 5'-phosphate.

It catalyses the reaction (2-aminoethyl)phosphonate + pyruvate = phosphonoacetaldehyde + L-alanine. Involved in phosphonate degradation. The protein is 2-aminoethylphosphonate--pyruvate transaminase of Burkholderia mallei (strain NCTC 10247).